A 246-amino-acid chain; its full sequence is Carboxy-S-adenosyl-L-methionine synthase (246 aa).

Residues Tyr-43, 68 to 70 (GCS), 93 to 94 (DN), 121 to 122 (DI), Asn-136, and Arg-203 contribute to the S-adenosyl-L-methionine site.

Belongs to the class I-like SAM-binding methyltransferase superfamily. Cx-SAM synthase family. Homodimer.

It carries out the reaction prephenate + S-adenosyl-L-methionine = carboxy-S-adenosyl-L-methionine + 3-phenylpyruvate + H2O. In terms of biological role, catalyzes the conversion of S-adenosyl-L-methionine (SAM) to carboxy-S-adenosyl-L-methionine (Cx-SAM). This Vibrio cholerae serotype O1 (strain ATCC 39541 / Classical Ogawa 395 / O395) protein is Carboxy-S-adenosyl-L-methionine synthase.